The sequence spans 181 residues: Large ribosomal subunit protein uL5 (181 aa).

It belongs to the universal ribosomal protein uL5 family. As to quaternary structure, part of the 50S ribosomal subunit; part of the 5S rRNA/L5/L18/L25 subcomplex. Contacts the 5S rRNA and the P site tRNA. Forms a bridge to the 30S subunit in the 70S ribosome.

Its function is as follows. This is one of the proteins that bind and probably mediate the attachment of the 5S RNA into the large ribosomal subunit, where it forms part of the central protuberance. In the 70S ribosome it contacts protein S13 of the 30S subunit (bridge B1b), connecting the 2 subunits; this bridge is implicated in subunit movement. Contacts the P site tRNA; the 5S rRNA and some of its associated proteins might help stabilize positioning of ribosome-bound tRNAs. The sequence is that of Large ribosomal subunit protein uL5 from Campylobacter jejuni subsp. jejuni serotype O:6 (strain 81116 / NCTC 11828).